A 541-amino-acid chain; its full sequence is Carotenoid-cleaving dioxygenase, mitochondrial (541 aa).

4 residues coordinate Fe cation: His-188, His-248, His-319, and His-535.

The protein belongs to the carotenoid oxygenase family. Fe(2+) is required as a cofactor. Widely expressed. Detected in heart, spleen, lung, intestine, colon, stomach, kidney, bladder, and prostate. Highly expressed in liver and testis (at protein level).

The protein resides in the mitochondrion. It carries out the reaction all-trans-beta-carotene + O2 = beta-ionone + all-trans-10'-apo-beta-carotenal. It catalyses the reaction 5-cis-lycopene + O2 = 5-cis-10'-apo-lycopenal + (3E,5E)-6,10-dimethylundeca-3,5,9-trien-2-one. The catalysed reaction is 13-cis-lycopene + O2 = 13-cis-10'-apo-lycopenal + (3E,5E)-6,10-dimethylundeca-3,5,9-trien-2-one. The enzyme catalyses lutein + O2 = (3R,6R)-hydroxy-alpha-ionone + (3R)-3-hydroxy-10'-apo-beta-carotenal. It carries out the reaction lutein + O2 = (3R,6R)-3-hydroxy-10'-apo-alpha-carotenal + (3R)-hydroxy-beta-ionone. It catalyses the reaction all-trans-zeaxanthin + 2 O2 = 4,9-dimethyldodeca-2,4,6,8,10-pentaenedial + 2 (3R)-hydroxy-beta-ionone. The catalysed reaction is all-trans-zeaxanthin + O2 = (3R)-3-hydroxy-10'-apo-beta-carotenal + (3R)-hydroxy-beta-ionone. The enzyme catalyses beta-cryptoxanthin + O2 = all-trans-10'-apo-beta-carotenal + (3R)-hydroxy-beta-ionone. It carries out the reaction all-trans-10'-apo-beta-carotenal + O2 = beta-ionone + 4,9-dimethyldodeca-2,4,6,8,10-pentaenedial. It catalyses the reaction (3R)-3-hydroxy-10'-apo-beta-carotenal + O2 = 4,9-dimethyldodeca-2,4,6,8,10-pentaenedial + (3R)-hydroxy-beta-ionone. The catalysed reaction is (3R,6R)-3-hydroxy-10'-apo-alpha-carotenal + O2 = (3R,6R)-hydroxy-alpha-ionone + 4,9-dimethyldodeca-2,4,6,8,10-pentaenedial. Functionally, broad specificity mitochondrial dioxygenase that mediates the asymmetric oxidative cleavage of carotenoids. Cleaves carotenes (pure hydrocarbon carotenoids) such as all-trans-beta-carotene and lycopene as well as xanthophylls (oxygenated carotenoids) such as zeaxanthin, lutein and beta-cryptoxanthin at both the 9,10 and the 9',10' carbon-carbon double bond. Through its function in carotenoids metabolism regulates oxidative stress and the production of important signaling molecules. The polypeptide is Carotenoid-cleaving dioxygenase, mitochondrial (Mustela putorius furo (European domestic ferret)).